A 1063-amino-acid chain; its full sequence is Endo-1,4-beta-xylanase 2 (1063 aa).

CBM-cenC domains are found at residues 5-146 (NIVM…GPAP), 183-313 (NIIK…LEGP), 348-482 (NHIF…IEGP), and 517-662 (NIVS…QGPS). One can recognise a GH10 domain in the interval 711–1006 (SGATVKIRQT…NEAGKRFLEI (296 aa)). The Proton donor role is filled by Glu840. Catalysis depends on Glu941, which acts as the Nucleophile.

Belongs to the glycosyl hydrolase 10 (cellulase F) family.

The enzyme catalyses Endohydrolysis of (1-&gt;4)-beta-D-xylosidic linkages in xylans.. It functions in the pathway glycan degradation; xylan degradation. Its function is as follows. Binds to and hydrolyzes insoluble and soluble xylan substrates. The sequence is that of Endo-1,4-beta-xylanase 2 from Arabidopsis thaliana (Mouse-ear cress).